A 561-amino-acid chain; its full sequence is Cytochrome P450 monooxygenase iboC (561 aa).

A helical transmembrane segment spans residues 8–28 (RFYYQLLAAVLIPALFVAWAA). Heme is bound at residue C484.

Belongs to the cytochrome P450 family. It depends on heme as a cofactor.

The protein localises to the membrane. Its pathway is secondary metabolite biosynthesis. Functionally, cytochrome P450 monooxygenase; part of the gene cluster that mediates the biosynthesis of the psychoactive metabolites ibotenic acid and muscimol. The first committed step is glutamate hydroxylation by the 2-oxoglutarate-dependent dioxygenase iboH, and the last step is decarboxylation of ibotenic acid to muscimol by the decarboxylase iboD. The order of the intermediate reactions is somewhat ambiguous. IboA likely activates the carboxylic acid at position 5 to introduce an amide bond, and the flavin monooxygenase iboF generates the N-O bond. There are several options for the latter step. One option is that iboF directly hydroxylates the amide nitrogen formed by iboA to produce a hydroxamic acid species. Another option is that iboF hydroxylates an external N-containing compound, whose resulting N-O bond is subsequently introduced into the hydroxyglutamate scaffold. The paralogous PLP-dependent cystathionine gamma-synthase-like enzymes iboG1 and iboG2 are likely involved in substitution of the OH group at position 3 by the O-N moiety. The first cyclic intermediate is most probably tricholomic acid which is likely desaturated to ibotenic acid by the cytochrome P450 monooxygenase iboC. The sequence is that of Cytochrome P450 monooxygenase iboC from Amanita muscaria (strain Koide BX008).